Consider the following 96-residue polypeptide: Co-chaperonin GroES (96 aa).

It belongs to the GroES chaperonin family. As to quaternary structure, heptamer of 7 subunits arranged in a ring. Interacts with the chaperonin GroEL.

The protein resides in the cytoplasm. In terms of biological role, together with the chaperonin GroEL, plays an essential role in assisting protein folding. The GroEL-GroES system forms a nano-cage that allows encapsulation of the non-native substrate proteins and provides a physical environment optimized to promote and accelerate protein folding. GroES binds to the apical surface of the GroEL ring, thereby capping the opening of the GroEL channel. The polypeptide is Co-chaperonin GroES (Verminephrobacter eiseniae (strain EF01-2)).